A 218-amino-acid chain; its full sequence is MTTQKTVLITGFEPFGKETINPSWEAAKQLQGRELCGARVEARQLPCVFDVSLACLYAAIDDVQPDLVIAVGQAGGRPNITVERVAININDASIPDNQGNQPINTPIVATGPAAYFATLPINAIVKGLRDAGVPASISQTAGTFVCNHVMYGLLHHLACIYPEIRGGVLHIPYLPEQAARYSGTPSMALETVITALEIAIDEALKNSEDIANNGDTAH.

Residues E83, C146, and H170 contribute to the active site.

Belongs to the peptidase C15 family. In terms of assembly, homotetramer.

Its subcellular location is the cytoplasm. It catalyses the reaction Release of an N-terminal pyroglutamyl group from a polypeptide, the second amino acid generally not being Pro.. Removes 5-oxoproline from various penultimate amino acid residues except L-proline. This is Pyrrolidone-carboxylate peptidase 2 from Photorhabdus laumondii subsp. laumondii (strain DSM 15139 / CIP 105565 / TT01) (Photorhabdus luminescens subsp. laumondii).